Consider the following 64-residue polypeptide: Large ribosomal subunit protein bL35 (64 aa).

The segment at 27 to 47 (MNGSHNLEKKNRKRSRRLHQA) is disordered. Residues 36 to 45 (KNRKRSRRLH) show a composition bias toward basic residues.

It belongs to the bacterial ribosomal protein bL35 family.

The chain is Large ribosomal subunit protein bL35 from Chlorobium phaeobacteroides (strain DSM 266 / SMG 266 / 2430).